A 345-amino-acid polypeptide reads, in one-letter code: Phosphoribosylformylglycinamidine cyclo-ligase (345 aa).

The protein belongs to the AIR synthase family.

Its subcellular location is the cytoplasm. The catalysed reaction is 2-formamido-N(1)-(5-O-phospho-beta-D-ribosyl)acetamidine + ATP = 5-amino-1-(5-phospho-beta-D-ribosyl)imidazole + ADP + phosphate + H(+). It functions in the pathway purine metabolism; IMP biosynthesis via de novo pathway; 5-amino-1-(5-phospho-D-ribosyl)imidazole from N(2)-formyl-N(1)-(5-phospho-D-ribosyl)glycinamide: step 2/2. This Methanopyrus kandleri (strain AV19 / DSM 6324 / JCM 9639 / NBRC 100938) protein is Phosphoribosylformylglycinamidine cyclo-ligase.